The chain runs to 669 residues: UvrABC system protein B (669 aa).

The Helicase ATP-binding domain maps to 26 to 414; it reads TNFHAGIAKQ…AGEVIELLVR (389 aa). 39–46 serves as a coordination point for ATP; it reads GVTGSGKT. The Beta-hairpin signature appears at 92–115; it reads YYDYYQPEAYVPASDTFIEKDSSI. One can recognise a Helicase C-terminal domain in the interval 435–597; it reads LISQINVCIK…SVVRPISDIL (163 aa). One can recognise a UVR domain in the interval 631-666; that stretch reads AAQMKVLEQQMYQHARDLEFEDAARIRDQIQRLREA.

This sequence belongs to the UvrB family. In terms of assembly, forms a heterotetramer with UvrA during the search for lesions. Interacts with UvrC in an incision complex.

The protein localises to the cytoplasm. Its function is as follows. The UvrABC repair system catalyzes the recognition and processing of DNA lesions. A damage recognition complex composed of 2 UvrA and 2 UvrB subunits scans DNA for abnormalities. Upon binding of the UvrA(2)B(2) complex to a putative damaged site, the DNA wraps around one UvrB monomer. DNA wrap is dependent on ATP binding by UvrB and probably causes local melting of the DNA helix, facilitating insertion of UvrB beta-hairpin between the DNA strands. Then UvrB probes one DNA strand for the presence of a lesion. If a lesion is found the UvrA subunits dissociate and the UvrB-DNA preincision complex is formed. This complex is subsequently bound by UvrC and the second UvrB is released. If no lesion is found, the DNA wraps around the other UvrB subunit that will check the other stand for damage. This Xylella fastidiosa (strain 9a5c) protein is UvrABC system protein B.